The sequence spans 483 residues: ATP synthase subunit beta, chloroplastic (483 aa).

163–170 (GGAGVGKT) serves as a coordination point for ATP.

The protein belongs to the ATPase alpha/beta chains family. In terms of assembly, F-type ATPases have 2 components, CF(1) - the catalytic core - and CF(0) - the membrane proton channel. CF(1) has five subunits: alpha(3), beta(3), gamma(1), delta(1), epsilon(1). CF(0) has four main subunits: a(1), b(1), b'(1) and c(9-12).

The protein localises to the plastid. It is found in the chloroplast thylakoid membrane. The catalysed reaction is ATP + H2O + 4 H(+)(in) = ADP + phosphate + 5 H(+)(out). Produces ATP from ADP in the presence of a proton gradient across the membrane. The catalytic sites are hosted primarily by the beta subunits. The polypeptide is ATP synthase subunit beta, chloroplastic (Ostreococcus tauri).